The following is a 620-amino-acid chain: Chaperone protein HscA homolog (620 aa).

Belongs to the heat shock protein 70 family.

In terms of biological role, chaperone involved in the maturation of iron-sulfur cluster-containing proteins. Has a low intrinsic ATPase activity which is markedly stimulated by HscB. The sequence is that of Chaperone protein HscA homolog from Shewanella sediminis (strain HAW-EB3).